Here is a 380-residue protein sequence, read N- to C-terminus: Chaperone protein DnaJ (380 aa).

The region spanning 6 to 71 (DYYAILEVSR…QKRAAYDQYG (66 aa)) is the J domain. A CR-type zinc finger spans residues 136–215 (GVKKDVRVIT…CHGEGTVEKE (80 aa)). The Zn(2+) site is built by Cys149, Cys152, Cys167, Cys170, Cys189, Cys192, Cys203, and Cys206. CXXCXGXG motif repeat units follow at residues 149–156 (CEACHGTG), 167–174 (CPSCHGAG), 189–196 (CPTCHGAG), and 203–210 (CKVCHGEG).

The protein belongs to the DnaJ family. In terms of assembly, homodimer. The cofactor is Zn(2+).

It localises to the cytoplasm. Functionally, participates actively in the response to hyperosmotic and heat shock by preventing the aggregation of stress-denatured proteins and by disaggregating proteins, also in an autonomous, DnaK-independent fashion. Unfolded proteins bind initially to DnaJ; upon interaction with the DnaJ-bound protein, DnaK hydrolyzes its bound ATP, resulting in the formation of a stable complex. GrpE releases ADP from DnaK; ATP binding to DnaK triggers the release of the substrate protein, thus completing the reaction cycle. Several rounds of ATP-dependent interactions between DnaJ, DnaK and GrpE are required for fully efficient folding. Also involved, together with DnaK and GrpE, in the DNA replication of plasmids through activation of initiation proteins. This chain is Chaperone protein DnaJ, found in Acetobacter pasteurianus (strain NBRC 105184 / IFO 3283-01).